A 119-amino-acid polypeptide reads, in one-letter code: uncharacterized protein (119 aa).

Residues Leu-55–Asn-119 are disordered. The segment covering Leu-81–Thr-92 has biased composition (polar residues).

This is an uncharacterized protein from Saccharomyces cerevisiae (strain ATCC 204508 / S288c) (Baker's yeast).